The primary structure comprises 331 residues: Eukaryotic translation initiation factor 2 subunit 2 (331 aa).

2 disordered regions span residues 1–75 and 97–120; these read MSGD…DLNF and AIKDVKIESDAQEPAEPEDDLDIM. Ser2 bears the N-acetylserine mark. Ser2 and Ser13 each carry phosphoserine. Over residues 13 to 22 the composition is skewed to basic residues; the sequence is SKKKKKKKKP. At Thr36 the chain carries Phosphothreonine. Basic and acidic residues predominate over residues 40–51; sequence ETKEVEPEPTEE. Ser67 bears the Phosphoserine mark. Lys102 is covalently cross-linked (Glycyl lysine isopeptide (Lys-Gly) (interchain with G-Cter in SUMO2)). Ser105 carries the post-translational modification Phosphoserine. A compositionally biased stretch (acidic residues) spans 106–118; it reads DAQEPAEPEDDLD. A phosphoserine mark is found at Ser158 and Ser216. An N6-acetyllysine mark is found at Lys263 and Lys291. The C4-type zinc finger occupies 279-303; sequence CHTCRSPDTILQKDTRLYFLQCETC.

The protein belongs to the eIF-2-beta/eIF-5 family. Eukaryotic translation initiation factor 2 eIF2 is a heterotrimeric complex composed of an alpha (EIF2S1), a beta (EIF2S2) and a gamma (EIF2S3) chain. eIF2 is member of the 43S pre-initiation complex (43S PIC). eIF2 forms a complex with at least CELF1/CUGBP1, CALR, CALR3, EIF2S1, EIF2S2, HSP90B1 and HSPA5. Interacts with BZW2/5MP1. Interacts with EIF5.

The protein resides in the cytoplasm. It localises to the cytosol. Component of the eIF2 complex that functions in the early steps of protein synthesis by forming a ternary complex with GTP and initiator tRNA. This complex binds to a 40S ribosomal subunit, followed by mRNA binding to form the 43S pre-initiation complex (43S PIC). Junction of the 60S ribosomal subunit to form the 80S initiation complex is preceded by hydrolysis of the GTP bound to eIF2 and release of an eIF2-GDP binary complex. In order for eIF2 to recycle and catalyze another round of initiation, the GDP bound to eIF2 must exchange with GTP by way of a reaction catalyzed by eIF2B. The chain is Eukaryotic translation initiation factor 2 subunit 2 (Eif2s2) from Mus musculus (Mouse).